Consider the following 286-residue polypeptide: Acetyl-coenzyme A carboxylase carboxyl transferase subunit beta (286 aa).

The 260-residue stretch at 27-286 folds into the CoA carboxyltransferase N-terminal domain; that stretch reads LMTKCPKCKL…HSEETNHATI (260 aa). Zn(2+)-binding residues include C31, C34, C50, and C52. The C4-type zinc finger occupies 31–52; the sequence is CPKCKLIQYTKQLEANLKVCVC.

Belongs to the AccD/PCCB family. Acetyl-CoA carboxylase is a heterohexamer composed of biotin carboxyl carrier protein (AccB), biotin carboxylase (AccC) and two subunits each of ACCase subunit alpha (AccA) and ACCase subunit beta (AccD). Zn(2+) is required as a cofactor.

The protein resides in the cytoplasm. It catalyses the reaction N(6)-carboxybiotinyl-L-lysyl-[protein] + acetyl-CoA = N(6)-biotinyl-L-lysyl-[protein] + malonyl-CoA. It participates in lipid metabolism; malonyl-CoA biosynthesis; malonyl-CoA from acetyl-CoA: step 1/1. Functionally, component of the acetyl coenzyme A carboxylase (ACC) complex. Biotin carboxylase (BC) catalyzes the carboxylation of biotin on its carrier protein (BCCP) and then the CO(2) group is transferred by the transcarboxylase to acetyl-CoA to form malonyl-CoA. The chain is Acetyl-coenzyme A carboxylase carboxyl transferase subunit beta from Exiguobacterium sibiricum (strain DSM 17290 / CCUG 55495 / CIP 109462 / JCM 13490 / 255-15).